A 79-amino-acid chain; its full sequence is RNA-binding protein Hfq (79 aa).

One can recognise a Sm domain in the interval 10-69 (DPFLNALRKEHVPVSIYLVNGIKLQGNIESFDQYVVLLRNTVTQMVYKHAISTVVPARAV).

It belongs to the Hfq family. As to quaternary structure, homohexamer.

Functionally, RNA chaperone that binds small regulatory RNA (sRNAs) and mRNAs to facilitate mRNA translational regulation in response to envelope stress, environmental stress and changes in metabolite concentrations. Also binds with high specificity to tRNAs. The sequence is that of RNA-binding protein Hfq from Cupriavidus metallidurans (strain ATCC 43123 / DSM 2839 / NBRC 102507 / CH34) (Ralstonia metallidurans).